Reading from the N-terminus, the 258-residue chain is N(G),N(G)-dimethylarginine dimethylaminohydrolase (258 aa).

Substrate-binding positions include leucine 19, aspartate 62, 67–68 (ED), arginine 87, and arginine 133. Histidine 163 acts as the Proton donor in catalysis. Cysteine 248 acts as the Nucleophile in catalysis.

The protein belongs to the DDAH family.

The catalysed reaction is N(omega),N(omega)-dimethyl-L-arginine + H2O = dimethylamine + L-citrulline. It carries out the reaction N(omega)-methyl-L-arginine + H2O = L-citrulline + methylamine. Its function is as follows. Hydrolyzes N(G),N(G)-dimethyl-L-arginine (ADMA) and N(G)-monomethyl-L-arginine (MMA). The protein is N(G),N(G)-dimethylarginine dimethylaminohydrolase (ddaH) of Streptomyces coelicolor (strain ATCC BAA-471 / A3(2) / M145).